Reading from the N-terminus, the 266-residue chain is Inositol-1-monophosphatase (266 aa).

Residues E69, D86, L88, and D89 each contribute to the Mg(2+) site. E69 contacts substrate. Residues 88–91, R185, and D214 contribute to the substrate site; that span reads LDGT. A Mg(2+)-binding site is contributed by D214.

The protein belongs to the inositol monophosphatase superfamily. Mg(2+) serves as cofactor.

The enzyme catalyses a myo-inositol phosphate + H2O = myo-inositol + phosphate. The sequence is that of Inositol-1-monophosphatase (suhB) from Mesorhizobium japonicum (strain LMG 29417 / CECT 9101 / MAFF 303099) (Mesorhizobium loti (strain MAFF 303099)).